The following is a 1708-amino-acid chain: Clathrin heavy chain 1 (1708 aa).

The segment at 1-492 (MAAANAPIAM…VDNDLALKIY (492 aa)) is globular terminal domain. WD40-like repeat regions lie at residues 25–67 (FVTF…RPIT), 68–113 (ADSA…MPEQ), 114–155 (VVFW…ANLA), 156–205 (NNQI…QALE), 206–270 (AHAA…PDFQ), 271–314 (DDFP…ISPD), and 315–343 (PIFL…ATVN). Residues 462–478 (ENWLAEDKLECSEELGD) form a binding site for the uncoating ATPase, involved in lattice disassembly region. The tract at residues 493–536 (IKARATPKVVAAFAERREFDKILIYSKQVGYTPDYLFLLQTILR) is flexible linker. The distal segment stretch occupies residues 537-648 (TDPQGAVNFA…RALQHYTELP (112 aa)). The heavy chain arm stretch occupies residues 537–1708 (TDPQGAVNFA…AYGMPPMGSY (1172 aa)). CHCR repeat units follow at residues 551 to 697 (QMEG…QIVV), 700 to 842 (AKEY…PEDF), 847 to 986 (ILSV…QLID), 993 to 1138 (LPES…VSEA), 1142 to 1283 (FIRA…FRLA), 1288 to 1434 (LNII…DLIN), and 1437 to 1580 (LNVL…KECF). The proximal segment stretch occupies residues 653–1708 (VMVNTHAIEP…AYGMPPMGSY (1056 aa)). The interval 1227-1536 (AAKIIYAFIS…YIYKKAGRWK (310 aa)) is involved in binding clathrin light chain. The interval 1564–1708 (SEDLLVYFIE…AYGMPPMGSY (145 aa)) is trimerization.

Belongs to the clathrin heavy chain family. Clathrin triskelions, composed of 3 heavy chains and 3 light chains, are the basic subunits of the clathrin coat.

The protein localises to the cytoplasmic vesicle membrane. Its subcellular location is the membrane. It is found in the coated pit. Functionally, clathrin is the major protein of the polyhedral coat of coated pits and vesicles. The sequence is that of Clathrin heavy chain 1 from Oryza sativa subsp. japonica (Rice).